Here is a 358-residue protein sequence, read N- to C-terminus: Methylthioribose-1-phosphate isomerase (358 aa).

Substrate is bound by residues 54 to 56 (RGA), Arg-96, and Gln-205. Asp-246 (proton donor) is an active-site residue. 256-257 (AK) provides a ligand contact to substrate.

This sequence belongs to the eIF-2B alpha/beta/delta subunits family. MtnA subfamily.

The enzyme catalyses 5-(methylsulfanyl)-alpha-D-ribose 1-phosphate = 5-(methylsulfanyl)-D-ribulose 1-phosphate. The protein operates within amino-acid biosynthesis; L-methionine biosynthesis via salvage pathway; L-methionine from S-methyl-5-thio-alpha-D-ribose 1-phosphate: step 1/6. Catalyzes the interconversion of methylthioribose-1-phosphate (MTR-1-P) into methylthioribulose-1-phosphate (MTRu-1-P). In Pseudomonas entomophila (strain L48), this protein is Methylthioribose-1-phosphate isomerase.